Reading from the N-terminus, the 83-residue chain is Probable insulin-like peptide alpha-type 2 (83 aa).

An N-terminal signal peptide occupies residues 1–21; the sequence is MHTTTILICFFIFLVQVSTMD. Cystine bridges form between C32-C66, C44-C79, and C54-C80.

Belongs to the insulin family.

The protein resides in the secreted. The chain is Probable insulin-like peptide alpha-type 2 (ins-22) from Caenorhabditis elegans.